A 191-amino-acid chain; its full sequence is Small ribosomal subunit protein uS7 (191 aa).

Positions 56-80 (NKSGEQGDGDGESGGKAGGIKKRSL) are disordered.

This sequence belongs to the universal ribosomal protein uS7 family. Part of the 30S ribosomal subunit. Contacts proteins S9 and S11.

Functionally, one of the primary rRNA binding proteins, it binds directly to 16S rRNA where it nucleates assembly of the head domain of the 30S subunit. Is located at the subunit interface close to the decoding center, probably blocks exit of the E-site tRNA. This Coxiella burnetii (strain RSA 493 / Nine Mile phase I) protein is Small ribosomal subunit protein uS7.